The chain runs to 80 residues: Exodeoxyribonuclease 7 small subunit (80 aa).

Belongs to the XseB family. As to quaternary structure, heterooligomer composed of large and small subunits.

The protein localises to the cytoplasm. It catalyses the reaction Exonucleolytic cleavage in either 5'- to 3'- or 3'- to 5'-direction to yield nucleoside 5'-phosphates.. Bidirectionally degrades single-stranded DNA into large acid-insoluble oligonucleotides, which are then degraded further into small acid-soluble oligonucleotides. This chain is Exodeoxyribonuclease 7 small subunit, found in Pseudomonas entomophila (strain L48).